The following is a 323-amino-acid chain: MSERTKRSVGVLGAPFSKGQARGGVEEGPIYIRRAGLIEKLEELEYEVRDYGDLHFPELPCDEPFQNVKNPRTVGQAAEKVANAVSEVKRSGRVCLTLGGDHSLAVGTITGHAKVHPDLCVVWVDAHADINTPITSPSGNLHGQPVSFLIRELQTKVPAIPGFSWVQPSLSAKDIVYIGLRDVDPGEHYILKTLGIKSYSMSDVDRLTINKVMEETIEFLVGKKKRPIHLSFDIDGLDPSVAPATGTPVPGGLTYREGMYITEQLYNTGLLSAVDMMEVNPSRGETERESKLTVNTSLNMILSCFGKAREGFHASSLRVPDLI.

Residues H102, D125, H127, and D129 each coordinate Mn(2+). Substrate-binding positions include 127-131 (HADIN), 138-140 (SGN), and D184. D233 and D235 together coordinate Mn(2+). Positions 247 and 278 each coordinate substrate.

This sequence belongs to the arginase family. Homotrimer. The cofactor is Mn(2+).

The catalysed reaction is L-arginine + H2O = urea + L-ornithine. The protein operates within nitrogen metabolism; urea cycle; L-ornithine and urea from L-arginine: step 1/1. In Aquarana catesbeiana (American bullfrog), this protein is Arginase, hepatic.